Consider the following 127-residue polypeptide: uncharacterized protein (127 aa).

The signal sequence occupies residues 1-23; that stretch reads MSKPLKFLLWSSLALLLLQIGSG.

This is an uncharacterized protein from Arabidopsis thaliana (Mouse-ear cress).